Here is a 674-residue protein sequence, read N- to C-terminus: Ribosome biogenesis protein BOP1 homolog (674 aa).

The interval 1 to 28 is disordered; sequence MASTSAATPLKNKRKFENGKKKPKTLKD. Over residues 15 to 28 the composition is skewed to basic and acidic residues; sequence KFENGKKKPKTLKD. WD repeat units lie at residues 342–384, 386–425, 427–458, 459–500, 503–541, 587–626, and 643–674; these read GHTG…KTFQ, DGEV…RLHV, QTEA…LMLK, MPNE…SQCP, KRKG…LVKK, HHTA…DFVK, and PNDL…LFTY.

The protein belongs to the WD repeat BOP1/ERB1 family.

It is found in the nucleus. The protein resides in the nucleolus. It localises to the nucleoplasm. In terms of biological role, required for maturation of ribosomal RNAs and formation of the large ribosomal subunit. This chain is Ribosome biogenesis protein BOP1 homolog, found in Caenorhabditis elegans.